A 512-amino-acid chain; its full sequence is Tabersonine 16-hydroxylase 2 (512 aa).

M1 is a topological domain (lumenal). The chain crosses the membrane as a helical span at residues 2–22 (ELYYFSTFAFLLFCFILAKTL). At 23-512 (KKSGQSNLKL…YSASSLKGKY (490 aa)) the chain is on the cytoplasmic side. Position 445 (C445) interacts with heme.

Belongs to the cytochrome P450 family. Heme serves as cofactor. Expressed at low levels in roots, fruits, stems, flower buds and flowers, but highly expressed in young leaves. Detected in adaxial and abaxial epidermis cells.

The protein resides in the endoplasmic reticulum membrane. The enzyme catalyses (-)-tabersonine + reduced [NADPH--hemoprotein reductase] + O2 = 16-hydroxytabersonine + oxidized [NADPH--hemoprotein reductase] + H2O + H(+). Involved in the foliar biosynthesis of vindoline, a precursor of vinblastine and vincristine. Hydroxylates specifically tabersonine, 2,3-dihydrotabersonine and 2,3-dihydro-3-hydroxytabersonine, but has no activity with naringenin, tryptamine, secologanin, strictosidine, ajmalicine, vindoline and catharanthine. This is Tabersonine 16-hydroxylase 2 from Catharanthus roseus (Madagascar periwinkle).